We begin with the raw amino-acid sequence, 157 residues long: Methylglyoxal synthase (157 aa).

The region spanning M1–L157 is the MGS-like domain. Substrate contacts are provided by residues H12, K16, T38 to T41, and S71 to G72. The active-site Proton donor/acceptor is the D77. H104 contributes to the substrate binding site.

This sequence belongs to the methylglyoxal synthase family.

The enzyme catalyses dihydroxyacetone phosphate = methylglyoxal + phosphate. Its function is as follows. Catalyzes the formation of methylglyoxal from dihydroxyacetone phosphate. This chain is Methylglyoxal synthase, found in Maridesulfovibrio salexigens (strain ATCC 14822 / DSM 2638 / NCIMB 8403 / VKM B-1763) (Desulfovibrio salexigens).